A 1010-amino-acid chain; its full sequence is Outer kinetochore KNL1 complex subunit knl-1 (1010 aa).

9 tandem repeats follow at residues Met85–Ser88, Met109–Ser112, Met228–Ser231, Met255–Thr258, Met278–Ser281, Met323–Thr326, Met346–Ser349, Met402–Thr405, and Met428–Ser431. Positions Met85–Ser431 are 9 X 4 AA repeats of M-[D/E]-[I/L/M]-[S/T]. Coiled coils occupy residues Arg820 to Lys915 and Lys956 to Gln988.

As to quaternary structure, component of the KNL1 complex composed of knl-1 and kbp-5. Part of the ten-subunit outer kinetochore KMN network that includes the KNL1, MIS12 and NDC80 complexes. Interacts with the protein phosphatase 1 (PP1) catalytic subunit gsp-1; the interaction is direct. Interacts with the protein phosphatase 1 (PP1) catalytic subunit gsp-2; the interaction is direct. Interacts with the MIS12 complex subunits kbp-1, kbp-2 and mis-12. Interacts with the NDC80 complex components ndc-80 and him-10. Interacts with knl-3. Interacts with kbp-3. Interacts with kbp-4. Interacts with kbp-5.

The protein localises to the cytoplasm. Its subcellular location is the cell cortex. It localises to the chromosome. It is found in the centromere. The protein resides in the kinetochore. Functionally, acts as a component of the outer kinetochore KNL1 complex that serves as a docking point for spindle assembly checkpoint components and mediates microtubule-kinetochore interactions. Kinetochores, consisting of a centromere-associated inner segment and a microtubule-contacting outer segment, play a crucial role in chromosome segregation by mediating the physical connection between centromeric DNA and spindle microtubules. The outer kinetochore is made up of the ten-subunit KMN network, comprising the MIS12, NDC80 and KNL1 complexes, and auxiliary microtubule-associated components; together they connect the outer kinetochore with the inner kinetochore, bind microtubules, and mediate interactions with mitotic checkpoint proteins that delay anaphase until chromosomes are bioriented on the spindle. Binds the protein phosphatase 1 catalytic subunits gsp-1 and gsp-2, which has a role in delaying formation of load-bearing kinetochore-microtubule attachments. Required for the recruitment of spindle-assembly checkpoint components bub-1 and mdf-1/2 to unattached kinetochores. Binds microtubules which plays a role in silencing of the spindle assembly checkpoint, but not the formation of load-bearing microtubule-kinetochore attachments. Has a role in the correct localization of the spindly-like protein spdl-1 and the RZZ complex that is composed of rod-1, czw-1 and zwl-1 to kinetochores. The protein is Outer kinetochore KNL1 complex subunit knl-1 (knl-1) of Caenorhabditis elegans.